Consider the following 278-residue polypeptide: HTH-type transcriptional activator RhaS (278 aa).

In terms of domain architecture, HTH araC/xylS-type spans 174-272; that stretch reads NQLMAWLEEH…NWSPRDIRQG (99 aa). DNA-binding regions (H-T-H motif) lie at residues 191–212 and 239–262; these read EAVA…KQHT and VTEI…RREF.

As to quaternary structure, binds DNA as a dimer.

It is found in the cytoplasm. Its function is as follows. Activates expression of the rhaBAD and rhaT operons. The sequence is that of HTH-type transcriptional activator RhaS from Salmonella schwarzengrund (strain CVM19633).